Reading from the N-terminus, the 302-residue chain is Monopolin complex subunit MAM1 (302 aa).

Disordered stretches follow at residues 53–83 (YHKE…QNNV) and 257–276 (TSEN…SKGK). Over residues 257-268 (TSENPFSSSPNT) the composition is skewed to polar residues.

As to quaternary structure, component of the monopolin complex composed of at least CSM1, LRS4 and MAM1. The complex associates with the kinetochore during late pachytene. Post-translationally, phosphorylated by CDC5. This phosphorylation is required for the location to the kinetochores during late pachytene.

Its subcellular location is the nucleus. Component of the monopolin complex which promotes monoorientation during meiosis I, required for chromosome segregation during meiosis. The polypeptide is Monopolin complex subunit MAM1 (MAM1) (Saccharomyces cerevisiae (strain ATCC 204508 / S288c) (Baker's yeast)).